A 115-amino-acid polypeptide reads, in one-letter code: Secapin (115 aa).

A signal peptide spans 1 to 24 (MRFQVYILHLCFFILVVLTYLSQG). A propeptide spanning residues 25 to 90 (QSYTTTTTTS…STENFDITNR (66 aa)) is cleaved from the precursor. Cys99 and Cys110 are joined by a disulfide.

It belongs to the secapin family. In terms of tissue distribution, expressed in the epidermis, fat body and venom gland.

It is found in the secreted. Its function is as follows. Serine protease inhibitor which exhibits antifibrinolytic, antielastolytic and antimicrobial activities. Displays antimicrobial activity against bacteria and fungi. Likely functions in the innate immune response to microbial infection and possibly in the venom, as an antifibrinolytic agent. The recombinant form inhibits trypsin (IC(50)=80.02 nM, Ki=127.25 nM), chymotrypsin (IC(50)=393.78 nM, Ki=432.59 nM), the microbial serine proteases subtilisin A (IC(50)=379.20 nM, Ki=492.77 nM) and proteinase K (IC(50)=189.43 nM, Ki=271.76 nM), plasmin (IC(50)=457.98 nM, Ki=502.91 nM), human elastase (IC(50)=347.81 nM, Ki=469.90 nM) and porcine elastase (IC(50)=94.70 nM, Ki=125.62 nM). Does not inhibit thrombin. Binds to human plasmin and inhibits the plasmin-mediated degradation of fibrin to fibrin degradation products, indicating its role as an anti-fibrinolytic agent. Also binds to bacterial and fungal surfaces. Exhibits antimicrobial activity against the Gram-positive bacteria B.thuringiensis (MIC=4.21 uM) and P.larvae (MIC=11.13 uM), the Gram-negative bacteria E.coli (MIC=6.50 uM) and the multidrug-resistant A.baumannii (MIC=5 ug/ml, MBC=10 ug/ml), as well as against the fungus B.bassiana (IC(50)=2.57 uM). The synthetic peptide also exhibits antimicrobial activity against the Gram-positive bacterium P.larvae (MIC=41.12 uM), the Gram-negative bacterium P.aeruginosa (MIC=65.75 uM), and the fungus B.bassiana (IC(50)=44.27 uM). Is also able to prevent A.baumannii biofilm formation and eliminate established A.baumannii biofilms. In vitro, does not induce an inflammatory response and has no cytotoxic activity against mammalian cells. The protein is Secapin of Apis cerana (Indian honeybee).